Here is a 664-residue protein sequence, read N- to C-terminus: Delta-like protein C (664 aa).

A signal peptide spans 1–20 (MARVLLTCFFILISSHLGKS). Residues 21–511 (SGVFELKVLS…VNSPALPAAL (491 aa)) lie on the Extracellular side of the membrane. Residues 154-198 (VVCDEFYHGEECSDFCRPRNDTFGHFNCDAAGNRICLPGWKGDYC) enclose the DSL domain. Cystine bridges form between C156–C165, C169–C181, C189–C198, C203–C214, C207–C220, C222–C231, C234–C245, C240–C251, C253–C262, C269–C281, C275–C291, C293–C302, C309–C320, C314–C329, C331–C340, C347–C358, C352–C368, C370–C379, C386–C397, C391–C406, C408–C417, C424–C435, C429–C444, C446–C455, C462–C473, C467–C482, and C484–C493. The N-linked (GlcNAc...) asparagine glycan is linked to N173. 3 EGF-like domains span residues 199–232 (TEPI…PLCD), 233–263 (ECTR…LFCN), and 265–303 (DLNF…KNCE). In terms of domain architecture, EGF-like 4; calcium-binding spans 305–341 (ETNECDSNPCKNGGSCNDQENDYTCTCPQGFYGKNCE). EGF-like domains are found at residues 343-380 (SAMT…SNCE) and 382-418 (KIDR…SRCE). The region spanning 420 to 456 (NIDDCSSNPCQNAGTCVDGINGYTCTCTLGFSGKDCR) is the EGF-like 7; calcium-binding domain. One can recognise an EGF-like 8 domain in the interval 458-494 (RSDACSFMPCQNGGTCYTHFSGPVCQCPAGFMGTQCE). The helical transmembrane segment at 512–532 (IVSFTLGLITLTLVICAAIVV) threads the bilayer. The Cytoplasmic segment spans residues 533–664 (LRQMRQNHKA…IEQRVFATEV (132 aa)).

In terms of processing, ubiquitinated by mib, leading to its endocytosis and subsequent degradation. Strongly expressed in the early retina, where it precedes other delta proteins. Also expressed in cranial ganglia, in sensory epithelia including ear and lateral line and in scattered epidermal cells. In the mesoderm, expression is visible by 50% epiboly; it is expressed subsequently in the tail bud, in stripes in the presomitic mesoderm and in the posterior half of each somite. Also expressed in notochord, blood vessels and pronephros. In contrast to other delta proteins, it is not expressed in the majority of nascent primary neurons. In somites, it marks the posterior part of each formed somite, while deltaD (dld) marks the anterior part.

The protein resides in the membrane. Functionally, acts as a ligand for Notch receptors and is involved in somitogenesis. Can activate Notch receptors. Required in somite segmentation to keep the oscillations of neighboring presomitic mesoderm cells synchronized. The chain is Delta-like protein C (dlc) from Danio rerio (Zebrafish).